We begin with the raw amino-acid sequence, 416 residues long: Putative F-box/kelch-repeat protein At1g12870 (416 aa).

Residues 27–76 (MIASSSLPDDVVEEIFLKLPVKALMRFKSLSKQWRSTLESCYFSQRHLKI) form the F-box domain. Kelch repeat units lie at residues 199-243 (LVWL…PASA) and 297-341 (CMYE…HVLD).

The polypeptide is Putative F-box/kelch-repeat protein At1g12870 (Arabidopsis thaliana (Mouse-ear cress)).